We begin with the raw amino-acid sequence, 411 residues long: LIM domain-binding protein 1 (411 aa).

Ser2 is subject to N-acetylserine. Thr61 bears the Phosphothreonine mark. A phosphoserine mark is found at Ser265 and Ser302. Disordered stretches follow at residues 283–330 and 367–411; these read APPA…TFAL and DAAN…QASQ. The segment covering 302–318 has biased composition (low complexity); sequence SGGSTMSSGGGNTNNSN. Residues 336 to 375 form the LIM interaction domain (LID) domain; sequence DVMVVGEPTLMGGEFGDEDERLITRLENTQFDAANGIDDE.

The protein belongs to the LDB family. Interacts with ESR1. Forms homodimers and heterodimers. Interacts with and activates LHX1/LIM1. Interacts with the LIM domains of ISL1 and LMO2. Can assemble in a complex with LMO2 and TAL1/SCL but does not interact with TAL1/SCL directly. Strongly interacts with the LIM2 domain of LMX1A and more weakly with the LIM1 domain. Homodimerization is not required for, and does not effect, LMX1A-binding. Component of a nuclear TAL-1 complex composed at least of CBFA2T3, LDB1, TAL1 and TCF3. Interacts with LHX6 and LHX9. At neuronal promoters, forms a complex with LHX3 involved in the specification of interneurons, in motor neurons, it is displaced by ISL1 to form a ternary complex in which ISL1 contacts both LHX3 and LDB1. Interacts with SLK; leading to negatively regulate SLK kinase activity. Interacts with YWHAZ. Interacts with PRDM1/BLIMP1. Interacts with LMO4. Interacts with RLIM/RNF12; the interaction inhibits the ubiquitination of LMO proteins. Post-translationally, ubiquitinated by RLIM/RNF12, leading to its degradation by the proteasome. As to expression, expressed in a wide range of adult tissues including brain, heart, skeletal muscle, colon, thymus, spleen, kidney, liver, small intestine, lung and peripheral blood leukocytes.

Its subcellular location is the nucleus. Binds to the LIM domain of a wide variety of LIM domain-containing transcription factors. May regulate the transcriptional activity of LIM-containing proteins by determining specific partner interactions. Plays a role in the development of interneurons and motor neurons in cooperation with LHX3 and ISL1. Acts synergistically with LHX1/LIM1 in axis formation and activation of gene expression. Acts with LMO2 in the regulation of red blood cell development, maintaining erythroid precursors in an immature state. The chain is LIM domain-binding protein 1 (LDB1) from Homo sapiens (Human).